A 213-amino-acid chain; its full sequence is Uracil phosphoribosyltransferase (213 aa).

5-phospho-alpha-D-ribose 1-diphosphate-binding positions include Arg-78, Arg-103, and 130–138 (DPMLATGGT). Uracil contacts are provided by residues Ile-197 and 202–204 (GDA). Asp-203 lines the 5-phospho-alpha-D-ribose 1-diphosphate pocket.

It belongs to the UPRTase family. It depends on Mg(2+) as a cofactor.

The catalysed reaction is UMP + diphosphate = 5-phospho-alpha-D-ribose 1-diphosphate + uracil. It participates in pyrimidine metabolism; UMP biosynthesis via salvage pathway; UMP from uracil: step 1/1. Its activity is regulated as follows. Allosterically activated by GTP. In terms of biological role, catalyzes the conversion of uracil and 5-phospho-alpha-D-ribose 1-diphosphate (PRPP) to UMP and diphosphate. The chain is Uracil phosphoribosyltransferase from Nocardioides sp. (strain ATCC BAA-499 / JS614).